We begin with the raw amino-acid sequence, 139 residues long: Nucleoside diphosphate kinase (139 aa).

The ATP site is built by lysine 10, phenylalanine 58, arginine 86, threonine 92, arginine 104, and asparagine 114. Histidine 117 (pros-phosphohistidine intermediate) is an active-site residue.

Belongs to the NDK family. As to quaternary structure, homotetramer. Requires Mg(2+) as cofactor.

It is found in the cytoplasm. It carries out the reaction a 2'-deoxyribonucleoside 5'-diphosphate + ATP = a 2'-deoxyribonucleoside 5'-triphosphate + ADP. The catalysed reaction is a ribonucleoside 5'-diphosphate + ATP = a ribonucleoside 5'-triphosphate + ADP. Major role in the synthesis of nucleoside triphosphates other than ATP. The ATP gamma phosphate is transferred to the NDP beta phosphate via a ping-pong mechanism, using a phosphorylated active-site intermediate. The sequence is that of Nucleoside diphosphate kinase from Rhodococcus opacus (strain B4).